We begin with the raw amino-acid sequence, 99 residues long: Acylphosphatase (99 aa).

In terms of domain architecture, Acylphosphatase-like spans 5-97 (IRQVMVRGRV…YAGERFSILS (93 aa)). Catalysis depends on residues Arg20 and Asn38.

The protein belongs to the acylphosphatase family.

The catalysed reaction is an acyl phosphate + H2O = a carboxylate + phosphate + H(+). The protein is Acylphosphatase (acyP) of Rhodopseudomonas palustris (strain BisB5).